The primary structure comprises 468 residues: ATP synthase subunit beta (468 aa).

150 to 157 contacts ATP; sequence GGAGVGKT.

Belongs to the ATPase alpha/beta chains family. As to quaternary structure, F-type ATPases have 2 components, CF(1) - the catalytic core - and CF(0) - the membrane proton channel. CF(1) has five subunits: alpha(3), beta(3), gamma(1), delta(1), epsilon(1). CF(0) has three main subunits: a(1), b(2) and c(9-12). The alpha and beta chains form an alternating ring which encloses part of the gamma chain. CF(1) is attached to CF(0) by a central stalk formed by the gamma and epsilon chains, while a peripheral stalk is formed by the delta and b chains.

It localises to the cell inner membrane. The enzyme catalyses ATP + H2O + 4 H(+)(in) = ADP + phosphate + 5 H(+)(out). Produces ATP from ADP in the presence of a proton gradient across the membrane. The catalytic sites are hosted primarily by the beta subunits. The chain is ATP synthase subunit beta from Acidovorax ebreus (strain TPSY) (Diaphorobacter sp. (strain TPSY)).